Consider the following 509-residue polypeptide: Probable cytochrome P450 519B1 (509 aa).

The chain crosses the membrane as a helical span at residues M1 to R21. C456 contacts heme.

It belongs to the cytochrome P450 family. Requires heme as cofactor.

The protein localises to the membrane. The chain is Probable cytochrome P450 519B1 (cyp519B1) from Dictyostelium discoideum (Social amoeba).